Here is a 464-residue protein sequence, read N- to C-terminus: DNA primase DnaG (464 aa).

The region spanning 200-274 (DSIIVVEGRA…DVDYVARAPE (75 aa)) is the Toprim domain. The Mg(2+) site is built by E206, D248, and D250. Positions 322-332 (NGREEKVREVK) are enriched in basic and acidic residues. The disordered stretch occupies residues 322-359 (NGREEKVREVKPPAPAPAPAPAPKPIEKPEPKEREEKI). The span at 333 to 345 (PPAPAPAPAPAPK) shows a compositional bias: pro residues. Over residues 346–359 (PIEKPEPKEREEKI) the composition is skewed to basic and acidic residues.

This sequence belongs to the archaeal DnaG primase family. In terms of assembly, forms a ternary complex with MCM helicase and DNA. Component of the archaeal exosome complex. The cofactor is Mg(2+).

It carries out the reaction ssDNA + n NTP = ssDNA/pppN(pN)n-1 hybrid + (n-1) diphosphate.. Functionally, RNA polymerase that catalyzes the synthesis of short RNA molecules used as primers for DNA polymerase during DNA replication. Also part of the exosome, which is a complex involved in RNA degradation. Acts as a poly(A)-binding protein that enhances the interaction between heteromeric, adenine-rich transcripts and the exosome. The protein is DNA primase DnaG of Thermococcus onnurineus (strain NA1).